The chain runs to 442 residues: Meiosis-specific with OB domain-containing protein (442 aa).

A DNA-binding region (OB) is located at residues 167 to 272 (IINVLAAVKS…EANILLNFIR (106 aa)).

The protein belongs to the MEIOB family. Component of a multiprotein complex with RPA2 and SPATA22. Interacts with SPATA22. Interacts with the complex BRME1:HSF2BP:BRCA2. In fetal gonads, specifically expressed in the ovary starting at the 14th weeks post fertilization. In the adult, restricted to testis.

It localises to the cytoplasm. It is found in the nucleus. The protein localises to the chromosome. Functionally, single-stranded DNA-binding protein required for homologous recombination in meiosis I. Required for double strand breaks (DSBs) repair and crossover formation and promotion of faithful and complete synapsis. Not required for the initial loading of recombinases but required to maintain a proper number of RAD51 and DMC1 foci after the zygotene stage. May act by ensuring the stabilization of recombinases, which is required for successful homology search and meiotic recombination. Displays Single-stranded DNA 3'-5' exonuclease activity in vitro. The chain is Meiosis-specific with OB domain-containing protein from Homo sapiens (Human).